A 284-amino-acid chain; its full sequence is Trimeric intracellular cation channel type B-A (284 aa).

Residues 1 to 15 (MESLSELSVQFSQLS) are Lumenal-facing. The helical transmembrane segment at 16-33 (MFPFFDMAHYVVSVMSAR) threads the bilayer. The Cytoplasmic segment spans residues 34-46 (EQAGALDIAARSP). Residues 47–68 (MASWFSAMLYCFGGGILSSILL) form a helical membrane-spanning segment. Topologically, residues 69–79 (AEPPIAVLSNT) are lumenal. A helical transmembrane segment spans residues 80–99 (TNIMLASTIWYMVYYFPYDL). Over 100-102 (FYN) the chain is Cytoplasmic. A helical transmembrane segment spans residues 103–121 (CFFFLPIRLIIAGMKEVTR). Residues Lys117 and Arg121 each coordinate a 1,2-diacyl-sn-glycero-3-phospho-(1D-myo-inositol-4,5-bisphosphate). The Lumenal segment spans residues 122–137 (TWKILSGVTHAHSHYK). A helical membrane pass occupies residues 138 to 155 (DALLVMITIGWARGAGGG). The Cytoplasmic segment spans residues 156-177 (LISNFEQLVRGVWKPESNEFLK). Residues 178–195 (MSYPVKVTLIGAVLFTLQ) traverse the membrane as a helical segment. The Lumenal segment spans residues 196-206 (HGHYLPISRHN). A helical membrane pass occupies residues 207–224 (LMLIYTMFLVLIKVTMML). At 225–284 (THSTASPFLPLETPLQRILFGQRQKPSEVRQSASSSGAKGKPSKKTLDKDSGEQSKKKDS) the chain is on the cytoplasmic side. The tract at residues 246-284 (QRQKPSEVRQSASSSGAKGKPSKKTLDKDSGEQSKKKDS) is disordered. The span at 269–284 (KTLDKDSGEQSKKKDS) shows a compositional bias: basic and acidic residues.

It belongs to the TMEM38 family. As to quaternary structure, homotrimer; conformation seems to be controled by binding to diacylglycerol (DAG).

The protein resides in the endoplasmic reticulum membrane. The enzyme catalyses K(+)(in) = K(+)(out). Channel activity is activated by increased cytosolic Ca(2+) levels and blocked by luminal high Ca(2+) levels. Intracellular monovalent cation channel required for maintenance of rapid intracellular calcium release. Acts as a potassium counter-ion channel that functions in synchronization with calcium release from intracellular stores. Activated by increased cytosolic Ca(2+) levels. In Xenopus laevis (African clawed frog), this protein is Trimeric intracellular cation channel type B-A (tmem38b-a).